Consider the following 559-residue polypeptide: Leucine-rich repeat protein soc-2 (559 aa).

The span at 1 to 17 (METSKEFEFRPAKETSR) shows a compositional bias: basic and acidic residues. The tract at residues 1–55 (METSKEFEFRPAKETSRSKSPGGIVGRLSNFARNKARHSLSEKGSNSVGGSGGAG) is disordered. LRR repeat units lie at residues 74–95 (QDQR…IKEL), 97–118 (QLTE…IGQL), 120–142 (NLKK…ASLE), 143–164 (SLET…IYKI), 166–187 (SLET…IGNL), 189–210 (KLKM…IGKL), 212–233 (SLVV…IGDC), 235–256 (SLTQ…IGKL), 258–279 (NLVR…LESC), 281–302 (QLEE…LLTM), 305–326 (KIHT…GPQQ), 329–350 (STVT…IFSK), 353–374 (RLTK…MGSW), 376–397 (SITE…IEKL), 399–420 (NLEI…IGNL), 422–443 (KLRE…IGFL), 445–466 (HLTK…IGNL), 468–489 (SLQD…IGHL), 491–513 (SLKS…LALC), and 515–536 (SLEI…ITAG).

It belongs to the SHOC2 family. In terms of assembly, interacts with let-60.

Its function is as follows. Acts as a Ras effector and participates in MAPK pathway activation. Probably acts as a scaffolding protein in a protein phosphatase complex that specifically dephosphorylates Raf kinase and stimulates Raf activity at specialized signaling complexes upon Ras activation. Required for vulval development. Involved in fluid homeostasis. Plays a role in nicotinic acetylcholine receptor (nAChR)-mediated sensitivity to nicotine. The chain is Leucine-rich repeat protein soc-2 (soc-2) from Caenorhabditis elegans.